The sequence spans 336 residues: Glyceraldehyde-3-phosphate dehydrogenase (336 aa).

NAD(+) contacts are provided by residues 12 to 13 (RI), D34, and R79. Residues 150-152 (SCT), T181, 210-211 (TG), and R233 each bind D-glyceraldehyde 3-phosphate. C151 serves as the catalytic Nucleophile. An NAD(+)-binding site is contributed by N315.

The protein belongs to the glyceraldehyde-3-phosphate dehydrogenase family. Homotetramer.

It is found in the cytoplasm. The catalysed reaction is D-glyceraldehyde 3-phosphate + phosphate + NAD(+) = (2R)-3-phospho-glyceroyl phosphate + NADH + H(+). It functions in the pathway carbohydrate degradation; glycolysis; pyruvate from D-glyceraldehyde 3-phosphate: step 1/5. Functionally, involved in osmoadaptation. The chain is Glyceraldehyde-3-phosphate dehydrogenase (gpdA) from Emericella nidulans (strain FGSC A4 / ATCC 38163 / CBS 112.46 / NRRL 194 / M139) (Aspergillus nidulans).